The chain runs to 472 residues: Kynureninase 2 (472 aa).

Residues leucine 133, threonine 134, 162-165, aspartate 247, histidine 250, and tyrosine 272 each bind pyridoxal 5'-phosphate; that span reads FPSD. At lysine 273 the chain carries N6-(pyridoxal phosphate)lysine. The pyridoxal 5'-phosphate site is built by tryptophan 314 and asparagine 342.

It belongs to the kynureninase family. As to quaternary structure, homodimer. The cofactor is pyridoxal 5'-phosphate.

The protein resides in the cytoplasm. It carries out the reaction L-kynurenine + H2O = anthranilate + L-alanine + H(+). It catalyses the reaction 3-hydroxy-L-kynurenine + H2O = 3-hydroxyanthranilate + L-alanine + H(+). It functions in the pathway amino-acid degradation; L-kynurenine degradation; L-alanine and anthranilate from L-kynurenine: step 1/1. It participates in cofactor biosynthesis; NAD(+) biosynthesis; quinolinate from L-kynurenine: step 2/3. In terms of biological role, catalyzes the cleavage of L-kynurenine (L-Kyn) and L-3-hydroxykynurenine (L-3OHKyn) into anthranilic acid (AA) and 3-hydroxyanthranilic acid (3-OHAA), respectively. The chain is Kynureninase 2 (kyn-2) from Neurospora crassa (strain ATCC 24698 / 74-OR23-1A / CBS 708.71 / DSM 1257 / FGSC 987).